The chain runs to 934 residues: Bifunctional uridylyltransferase/uridylyl-removing enzyme (934 aa).

Residues 1-379 (MSAHDLKLEE…TFSRRKRKLS (379 aa)) form a uridylyltransferase region. A uridylyl-removing region spans residues 380–736 (DDGAFISENH…AKPHAFEAVT (357 aa)). Residues 496 to 613 (VDEHLLRCIA…IDFADTVQTM (118 aa)) enclose the HD domain. 2 consecutive ACT domains span residues 737–818 (EITV…DMLA) and 848–931 (VIEV…RSPQ).

It belongs to the GlnD family. Requires Mg(2+) as cofactor.

It catalyses the reaction [protein-PII]-L-tyrosine + UTP = [protein-PII]-uridylyl-L-tyrosine + diphosphate. It carries out the reaction [protein-PII]-uridylyl-L-tyrosine + H2O = [protein-PII]-L-tyrosine + UMP + H(+). Uridylyltransferase (UTase) activity is inhibited by glutamine, while glutamine activates uridylyl-removing (UR) activity. Its function is as follows. Modifies, by uridylylation and deuridylylation, the PII regulatory proteins (GlnB and homologs), in response to the nitrogen status of the cell that GlnD senses through the glutamine level. Under low glutamine levels, catalyzes the conversion of the PII proteins and UTP to PII-UMP and PPi, while under higher glutamine levels, GlnD hydrolyzes PII-UMP to PII and UMP (deuridylylation). Thus, controls uridylylation state and activity of the PII proteins, and plays an important role in the regulation of nitrogen assimilation and metabolism. The polypeptide is Bifunctional uridylyltransferase/uridylyl-removing enzyme (Brucella suis (strain ATCC 23445 / NCTC 10510)).